Reading from the N-terminus, the 226-residue chain is Deoxyribose-phosphate aldolase (226 aa).

Catalysis depends on Asp93, which acts as the Proton donor/acceptor. The active-site Schiff-base intermediate with acetaldehyde is the Lys159. The Proton donor/acceptor role is filled by Lys189.

Belongs to the DeoC/FbaB aldolase family. DeoC type 1 subfamily.

The protein localises to the cytoplasm. It catalyses the reaction 2-deoxy-D-ribose 5-phosphate = D-glyceraldehyde 3-phosphate + acetaldehyde. It participates in carbohydrate degradation; 2-deoxy-D-ribose 1-phosphate degradation; D-glyceraldehyde 3-phosphate and acetaldehyde from 2-deoxy-alpha-D-ribose 1-phosphate: step 2/2. Its function is as follows. Catalyzes a reversible aldol reaction between acetaldehyde and D-glyceraldehyde 3-phosphate to generate 2-deoxy-D-ribose 5-phosphate. In Mycobacterium marinum (strain ATCC BAA-535 / M), this protein is Deoxyribose-phosphate aldolase.